The chain runs to 268 residues: Zinc transporter ZupT (268 aa).

5 helical membrane-spanning segments follow: residues 6–26 (LAFLLTLFAGLATGVGSLIAF), 37–57 (SFALGLSAGVMIYVSMVDIFF), 70–90 (TQGYWLTVIAFFGGMLLIGFI), 125–145 (GLFTALALAIHNFPEGIATFV), and 152–172 (SIGLAIAIAVAIHNIPEGIAV). Fe(2+) contacts are provided by N136 and E139. The Zn(2+) site is built by E139 and H164. The Fe(2+) site is built by N165, E168, and E197. E168 provides a ligand contact to Zn(2+). Helical transmembrane passes span 201-221 (AIVAILILMPFLNDLMFGIIF) and 248-268 (MSMYGVISGMALMAVSLLLLA).

The protein belongs to the ZIP transporter (TC 2.A.5) family. ZupT subfamily.

It is found in the cell membrane. The enzyme catalyses Zn(2+)(in) = Zn(2+)(out). In terms of biological role, mediates zinc uptake. May also transport other divalent cations. The protein is Zinc transporter ZupT of Oceanobacillus iheyensis (strain DSM 14371 / CIP 107618 / JCM 11309 / KCTC 3954 / HTE831).